The sequence spans 264 residues: Sexual differentiation protein ste4 (264 aa).

Residues 11–73 enclose the SAM domain; sequence WNNEAVCNWI…LSAIQSMKKQ (63 aa). Residues 111-139 form a leucine-zipper region; it reads LEKRVEYLETENTKLVKTLNSLNSEFLQL. One can recognise a Ras-associating domain in the interval 176-264; sequence GSFDLEVNDS…PSFVLSRRSC (89 aa).

As to quaternary structure, homodimer or heterodimer with another leucine-zipper protein.

Essential for mating and meiosis. The chain is Sexual differentiation protein ste4 (ste4) from Schizosaccharomyces pombe (strain 972 / ATCC 24843) (Fission yeast).